Consider the following 451-residue polypeptide: Tubulin gamma-2 chain (451 aa).

Ser131 bears the Phosphoserine; by BRSK1 mark. 142 to 148 (AGGTGSG) contacts GTP.

It belongs to the tubulin family. Component of the gamma-tubulin ring complex (gTuRC) consisting of TUBGCP2, TUBGCP3, TUBGCP4, TUBGCP5 and TUBGCP6 and gamma-tubulin TUBG1 or TUBG2. TUBGCP2, TUBGCP3, TUBGCP4, TUBGCP5 and TUBGCP6 assemble in a 5:5:2:1:1 stoichiometry; each is associated with a gamma-tubulin, thereby arranging 14 gamma-tubulins in a helical manner. Gamma-tubulin at the first position is blocked by TUBGCP3 at the last position, allowing 13 protafilaments to grow into a microtubule. Interacts with alpha-beta tubulin heterodimers; the interaction allows microtubules to nucleate from the gTuRC. In terms of processing, phosphorylation at Ser-131 by BRSK1 regulates centrosome duplication, possibly by mediating relocation of gamma-tubulin and its associated proteins from the cytoplasm to the centrosome.

It localises to the cytoplasm. Its subcellular location is the cytoskeleton. The protein localises to the microtubule organizing center. The protein resides in the centrosome. Tubulin is the major constituent of microtubules, protein filaments consisting of alpha- and beta-tubulin heterodimers. Gamma-tubulin is a key component of the gamma-tubulin ring complex (gTuRC) which mediates microtubule nucleation. The gTuRC regulates the minus-end nucleation of alpha-beta tubulin heterodimers that grow into microtubule protafilaments, a critical step in centrosome duplication and spindle formation. This chain is Tubulin gamma-2 chain (Tubg2), found in Mus musculus (Mouse).